We begin with the raw amino-acid sequence, 273 residues long: Tryptophan synthase alpha chain (273 aa).

Residues glutamate 56 and aspartate 67 each act as proton acceptor in the active site.

It belongs to the TrpA family. Tetramer of two alpha and two beta chains.

The catalysed reaction is (1S,2R)-1-C-(indol-3-yl)glycerol 3-phosphate + L-serine = D-glyceraldehyde 3-phosphate + L-tryptophan + H2O. The protein operates within amino-acid biosynthesis; L-tryptophan biosynthesis; L-tryptophan from chorismate: step 5/5. The alpha subunit is responsible for the aldol cleavage of indoleglycerol phosphate to indole and glyceraldehyde 3-phosphate. The polypeptide is Tryptophan synthase alpha chain (Shewanella baltica (strain OS185)).